Reading from the N-terminus, the 516-residue chain is Na(+)/H(+) antiporter NhaB (516 aa).

A run of 12 helical transmembrane segments spans residues 23-43 (LALI…PFVA), 61-80 (CYPL…IGMT), 97-117 (LLLI…LFVF), 120-140 (LLLG…AAAF), 144-164 (FLDA…FYGI), 202-222 (LMMH…VGEP), 238-258 (FFIR…LTCL), 303-323 (AVIG…VGLI), 348-368 (TEAL…AVII), 391-411 (LFYL…VGTV), 447-467 (ATPN…APLI), and 475-495 (VWMA…CVEF).

This sequence belongs to the NhaB Na(+)/H(+) (TC 2.A.34) antiporter family.

Its subcellular location is the cell inner membrane. It catalyses the reaction 2 Na(+)(in) + 3 H(+)(out) = 2 Na(+)(out) + 3 H(+)(in). Its function is as follows. Na(+)/H(+) antiporter that extrudes sodium in exchange for external protons. This Klebsiella pneumoniae (strain 342) protein is Na(+)/H(+) antiporter NhaB.